Reading from the N-terminus, the 136-residue chain is Heme-binding protein Rv0203 (136 aa).

The N-terminal stretch at 1–27 (MKTGTATTRRRLLAVLIALALPGAAVA) is a signal peptide. Cysteines 41 and 115 form a disulfide. Residues Tyr60, His64, and His90 each contribute to the heme site.

As to quaternary structure, dimer of dimers.

It localises to the secreted. Part of a heme-iron acquisition system. Acts by binding heme and delivering it to the membrane proteins MmpL3 and MmpL11. Can use free heme or heme from host hemoglobin. The sequence is that of Heme-binding protein Rv0203 from Mycobacterium tuberculosis (strain ATCC 25618 / H37Rv).